Consider the following 22-residue polypeptide: ANIVFDVESATTGTYSTFLTSF.

Its subcellular location is the secreted. The protein resides in the extracellular space. The protein localises to the golgi apparatus. It is found in the vacuole. It catalyses the reaction Endohydrolysis of the N-glycosidic bond at one specific adenosine on the 28S rRNA.. In terms of biological role, nicks pBR322 dsDNA. Has adenine polynucleotide glycosidase activity on herring sperm ssDNA. This chain is Dioicin-1, found in Phytolacca dioica (Bella sombra tree).